The chain runs to 570 residues: Proline--tRNA ligase (570 aa).

This sequence belongs to the class-II aminoacyl-tRNA synthetase family. ProS type 1 subfamily. In terms of assembly, homodimer.

Its subcellular location is the cytoplasm. The enzyme catalyses tRNA(Pro) + L-proline + ATP = L-prolyl-tRNA(Pro) + AMP + diphosphate. Catalyzes the attachment of proline to tRNA(Pro) in a two-step reaction: proline is first activated by ATP to form Pro-AMP and then transferred to the acceptor end of tRNA(Pro). As ProRS can inadvertently accommodate and process non-cognate amino acids such as alanine and cysteine, to avoid such errors it has two additional distinct editing activities against alanine. One activity is designated as 'pretransfer' editing and involves the tRNA(Pro)-independent hydrolysis of activated Ala-AMP. The other activity is designated 'posttransfer' editing and involves deacylation of mischarged Ala-tRNA(Pro). The misacylated Cys-tRNA(Pro) is not edited by ProRS. The polypeptide is Proline--tRNA ligase (Neisseria gonorrhoeae (strain ATCC 700825 / FA 1090)).